We begin with the raw amino-acid sequence, 109 residues long: Phosphoribosyl-ATP pyrophosphatase (109 aa).

It belongs to the PRA-PH family.

The protein resides in the cytoplasm. The enzyme catalyses 1-(5-phospho-beta-D-ribosyl)-ATP + H2O = 1-(5-phospho-beta-D-ribosyl)-5'-AMP + diphosphate + H(+). The protein operates within amino-acid biosynthesis; L-histidine biosynthesis; L-histidine from 5-phospho-alpha-D-ribose 1-diphosphate: step 2/9. This chain is Phosphoribosyl-ATP pyrophosphatase, found in Parvibaculum lavamentivorans (strain DS-1 / DSM 13023 / NCIMB 13966).